We begin with the raw amino-acid sequence, 265 residues long: Shikimate dehydrogenase (NADP(+)) (265 aa).

Residues Ser-14–Ser-16 and Thr-61 contribute to the shikimate site. The Proton acceptor role is filled by Lys-65. Residues Asn-85 and Asp-100 each coordinate shikimate. NADP(+)-binding positions include Gly-123 to Ala-127, Asn-146 to Lys-151, and Ala-209. Residue Tyr-211 coordinates shikimate. NADP(+) is bound at residue Gly-232.

This sequence belongs to the shikimate dehydrogenase family. Homodimer.

The enzyme catalyses shikimate + NADP(+) = 3-dehydroshikimate + NADPH + H(+). It participates in metabolic intermediate biosynthesis; chorismate biosynthesis; chorismate from D-erythrose 4-phosphate and phosphoenolpyruvate: step 4/7. In terms of biological role, involved in the biosynthesis of the chorismate, which leads to the biosynthesis of aromatic amino acids. Catalyzes the reversible NADPH linked reduction of 3-dehydroshikimate (DHSA) to yield shikimate (SA). The polypeptide is Shikimate dehydrogenase (NADP(+)) (Haloarcula marismortui (strain ATCC 43049 / DSM 3752 / JCM 8966 / VKM B-1809) (Halobacterium marismortui)).